Consider the following 119-residue polypeptide: Large ribosomal subunit protein bL20 (119 aa).

It belongs to the bacterial ribosomal protein bL20 family.

Binds directly to 23S ribosomal RNA and is necessary for the in vitro assembly process of the 50S ribosomal subunit. It is not involved in the protein synthesizing functions of that subunit. This is Large ribosomal subunit protein bL20 from Clostridium novyi (strain NT).